Here is a 513-residue protein sequence, read N- to C-terminus: MNILKSLISLSLITFISRILGFMRDLLIAYSFGASGITDAFFLAFKIPNLFRRIFAEGAFSQVFIPILSEYKNNKNIELTRNFISNILGLMIIILSLFTAFGIYFANDIVKICAPGFINSHEKLYLATKMLKIMFPYIFFVSLGSLTGSILNAWNYFSVPAYSSIFLNLSMIMFISFVTAYFNPKILSLAWAVIVGGVFQILYQFPYLKNINMLIFPKFNILNLGVLKFLKQIGIVALGMSVNQVSIIIATISSSFLISGSISWIYYSDRLVEFISGIFGVSLSTILLPLLSKSVNNINIKEYSRLLNWALRLVCILVIPSIIILFTLSESLITLLFKYGAFTYNDVIMTKNVIEFYSIGLLPFVLIKILLAGFYSIRNVKTPMKISIFILVLTQLMNIFFIKYFQYTSFALAISLASWINFFLLYRKLCQSEFFIPSTNWLRFLLKIFAAAMVMLILLFINKNLILSANTHSIFFKILRLFYICASSGGGYLFTLFCLGLRFNHFYLKSYKY.

15 helical membrane passes run 3 to 23, 25 to 45, 83 to 103, 133 to 153, 162 to 182, 186 to 206, 221 to 241, 245 to 265, 271 to 291, 313 to 333, 354 to 374, 382 to 402, 405 to 425, 441 to 461, and 481 to 501; these read ILKS…LGFM, DLLI…FLAF, FISN…AFGI, IMFP…ILNA, YSSI…TAYF, ILSL…YQFP, ILNL…LGMS, VSII…ISWI, LVEF…LPLL, LVCI…ESLI, IEFY…LAGF, TPMK…IFFI, FQYT…FFLL, WLRF…LLFI, and LFYI…CLGL.

This sequence belongs to the MurJ/MviN family.

Its subcellular location is the cell inner membrane. It participates in cell wall biogenesis; peptidoglycan biosynthesis. Involved in peptidoglycan biosynthesis. Transports lipid-linked peptidoglycan precursors from the inner to the outer leaflet of the cytoplasmic membrane. This Buchnera aphidicola subsp. Baizongia pistaciae (strain Bp) protein is Probable lipid II flippase MurJ.